The chain runs to 345 residues: Trace amine-associated receptor 6 (345 aa).

Residues 1–32 (MGSNSSPPTVLQLCYENVTGSCVKTPYSPGSR) lie on the Extracellular side of the membrane. Asn-17 carries an N-linked (GlcNAc...) asparagine glycan. Intrachain disulfides connect Cys-22–Cys-186 and Cys-105–Cys-190. The helical transmembrane segment at 33-53 (VILYAVFGFGAVLAVFGNLMV) threads the bilayer. Residues 54–68 (MISILHFKQLHSPTN) lie on the Cytoplasmic side of the membrane. The chain crosses the membrane as a helical span at residues 69 to 89 (FLIASLACADFGVGISVMPFS). The Extracellular portion of the chain corresponds to 90-107 (MVRSIESCWYFGRSFCTF). Residues 108–128 (HTCCDVAFCYSSLFHLSFISI) traverse the membrane as a helical segment. The Cytoplasmic portion of the chain corresponds to 129 to 147 (DRYIAVTDPLVYPTKFTVS). Residues 148–168 (VSGICIGVSWILPLVYSGAVF) form a helical membrane-spanning segment. Over 169–202 (YTGVYDDGLEELSSALNCVGGCQVVVNQNWVLID) the chain is Extracellular. Residues 174–187 (DDGLEELSSALNCV) are extracellular Loop 2 (ECL2). The chain crosses the membrane as a helical span at residues 203-223 (FLSFLIPTLVMIILYGNIFLV). The Cytoplasmic portion of the chain corresponds to 224–259 (ARQQAKKIENIGSKTESSSESYKARVARRERKAAKT). The chain crosses the membrane as a helical span at residues 260–276 (LGITVVAFMISWLPYSI). Residues 277 to 282 (DSLVDA) are Extracellular-facing. Residues 283-302 (FMGFITPAYIYEICVWCAYY) traverse the membrane as a helical segment. Topologically, residues 303-345 (NSAMNPLIYALFYPWFKKAIKVIMSGQVFKNSSATMNLFSEQI) are cytoplasmic.

The protein belongs to the G-protein coupled receptor 1 family. Specifically expressed in neurons of the olfactory epithelium, to discrete glomeruli predominantly localized to a confined bulb region. Present in a ventral area of the main olfactory epithelium.

The protein resides in the cell membrane. Its function is as follows. Olfactory receptor specific for trace amines, such as beta-phenylethylamine (beta-PEA). Trace amine compounds are enriched in animal body fluids and act on trace amine-associated receptors (TAARs) to elicit both intraspecific and interspecific innate behaviors. Beta-PEA-binding causes a conformation change that triggers signaling via G(s)-class of G alpha proteins (GNAL or GNAS). This Mus musculus (Mouse) protein is Trace amine-associated receptor 6.